The following is a 785-amino-acid chain: MEASSWLCYQARGFGSSRVWLWLLLALVLLNCSLVLSASPYLVGMGSFDITGPAADVNMMGYANTEQIASGIHFRLKSRAFIVAEPNGKRVVFVNIDACMASQIVTIKVLERLKARYGDLYNENNVAISGIHTHAGPGGYLQYVVYIVTSLGFVRQSFDVIVDGIEQSIVEAHNNLRPGKIFVNKGDLLDAGVNRSPSAYLNNPAEERSKYEYNVDKEMTLIKFVDDELGPVGSFNWFATHGTSMSRTNSLISGDNKGAAARFMEDWAEQMGLPKQSAHANSDDLRSLHKTSVLPRRVSTIIPEPNEITDDLIQLASSYEASGGRRLAGSSITRRIRSTQQNKPKFVSAFCQSNCGDVSPNVLGTFCIDTNLPCDFNHSTCNGKNELCYGRGPGYPDEFESTRVIGNRQFLKARDLFDSASEEIQGKIDYRHTYLDFSKLEVKVSTSAGGQQTVKTCPAAMGFAFAAGTTDGPGAFDFRQGDVKGNPFWKLVRNLLKTPGKDQVECHSPKPILLDTGEMKEPYDWAPAILPVQMIRIGQLVILCVPGEFTTMAGRRLRDAVKTVLTSGNSEFDKNIHVVLAGLTNSYSQYITTFEEYQIQRYEGASTLYGPHTLSAYIQEFQKLAMAMIANKEVPTNFQPPDMLDKQIGLLPGVVFDSTPLGVKFGDVNSDVPGNSTFNKGSTVNATFYSACPRNDLLTDGTFALVEKLDGNNNWVPVYDDDDWSLRFKWSRPARLSSRSFATLEWTVPEDAAAGVYRLRHFGASKPMFGSVRHFTGTSRAFAVR.

A signal peptide spans 1 to 35 (MEASSWLCYQARGFGSSRVWLWLLLALVLLNCSLV). Asn-31 carries an N-linked (GlcNAc...) asparagine glycan. The Nucleophile role is filled by Ser-359. Residues Asn-377, Asn-675, and Asn-685 are each glycosylated (N-linked (GlcNAc...) asparagine).

Belongs to the neutral ceramidase family. As to expression, expressed in seedlings, with higher levels in roots than in shoots.

Its subcellular location is the secreted. It is found in the endoplasmic reticulum. The protein resides in the golgi apparatus. It catalyses the reaction an N-acylsphing-4-enine + H2O = sphing-4-enine + a fatty acid. Its activity is regulated as follows. Enhanced activity in the presence of calcium, magnesium, manganese and zinc ions, but inhibited activity in the presence of iron ion. Hydrolyzes the sphingolipid ceramide into sphingosine and free fatty acid. Uses ceramide instead of phytoceramide as substrate. In Oryza sativa subsp. japonica (Rice), this protein is Neutral ceramidase.